The chain runs to 1386 residues: Restriction of telomere capping protein 1 (1386 aa).

Residues 31-56 (LEGNSSASPTPSMNPKQHNKSGTSSS) are compositionally biased toward polar residues. The segment at 31–58 (LEGNSSASPTPSMNPKQHNKSGTSSSNK) is disordered. WD repeat units follow at residues 180-227 (DHIR…NKPT), 234-278 (SHSD…GGYQ), 290-329 (FHTGPALSLNIHPEKEYVITGGRDQKVCIWNYGDSPTHQN), and 382-428 (NERE…IPKE). Low complexity-rich tracts occupy residues 595–606 (NPSFSNSVSPPF) and 649–663 (GNNNSGSNSASVSGN). Disordered regions lie at residues 595-629 (NPSFSNSVSPPFEQTTKPSLHRSATHNPMIQPPKP), 647-691 (EHGN…IQGY), 844-958 (TSTS…SQFG), 991-1021 (ASPIKIGSQHKHEKNTTSGSMSPQNKDSNHR), and 1090-1157 (SPNY…SRTE). Over residues 669–690 (LNRNHSQSTQGSNVSLSSSIQG) the composition is skewed to polar residues. Residues 859–872 (SNNIELSNANNNGS) are compositionally biased toward low complexity. Polar residues-rich tracts occupy residues 884 to 928 (SNLN…GSTR), 1006 to 1016 (TTSGSMSPQNK), 1090 to 1121 (SPNYSDQLHHSYSSTHSSPRPYYNSTTPGSSR), and 1134 to 1145 (NKTSYAKQSPVS). Basic and acidic residues predominate over residues 1148-1157 (LMRDEQSRTE). The stretch at 1171-1212 (IEETKVTSVNFGKSELTRAITGNNTGSPNTLYKPWKTEYLLK) is one WD 5 repeat. The RING-type; degenerate zinc-finger motif lies at 1338–1381 (CIYCDEPCKGLNIVTSLSCGHRGHFGCLREWFIDQENIVCPGGC).

It belongs to the WD repeat RTC1 family.

The protein localises to the vacuole. Functionally, may be involved in a process influencing telomere capping. This is Restriction of telomere capping protein 1 (RTC1) from Debaryomyces hansenii (strain ATCC 36239 / CBS 767 / BCRC 21394 / JCM 1990 / NBRC 0083 / IGC 2968) (Yeast).